Reading from the N-terminus, the 223-residue chain is Ribonuclease DdI (223 aa).

The first 25 residues, 1 to 25, serve as a signal peptide directing secretion; it reads MRLIAALLSVLLIASTAQSTVTIYE. A disulfide bridge links cysteine 46 with cysteine 51. Catalysis depends on residues histidine 63, glutamate 113, and histidine 117. The cysteines at positions 78 and 120 are disulfide-linked. N-linked (GlcNAc...) asparagine glycosylation occurs at asparagine 144. Disulfide bonds link cysteine 183-cysteine 213 and cysteine 194-cysteine 205.

It belongs to the RNase T2 family.

The protein localises to the lysosome. The enzyme catalyses a ribonucleotidyl-ribonucleotide-RNA + H2O = a 3'-end 3'-phospho-ribonucleotide-RNA + a 5'-end dephospho-ribonucleoside-RNA + H(+). Inhibited by Cu(2+) and Zn(2+). In terms of biological role, releases mononucleotides from RNA in the order of 3'-GMP &gt; 3'-UMP &gt; 3'-AMP &gt; 3'-CMP. This is Ribonuclease DdI (ddiA) from Dictyostelium discoideum (Social amoeba).